A 227-amino-acid chain; its full sequence is Phosphoribosylformylglycinamidine synthase subunit PurQ (227 aa).

The Glutamine amidotransferase type-1 domain occupies 2 to 226 (KFAVIQFPGS…VKAWKEEQVN (225 aa)). Cysteine 86 acts as the Nucleophile in catalysis. Residues histidine 195 and glutamate 197 contribute to the active site.

As to quaternary structure, part of the FGAM synthase complex composed of 1 PurL, 1 PurQ and 2 PurS subunits.

It is found in the cytoplasm. The catalysed reaction is N(2)-formyl-N(1)-(5-phospho-beta-D-ribosyl)glycinamide + L-glutamine + ATP + H2O = 2-formamido-N(1)-(5-O-phospho-beta-D-ribosyl)acetamidine + L-glutamate + ADP + phosphate + H(+). It catalyses the reaction L-glutamine + H2O = L-glutamate + NH4(+). The protein operates within purine metabolism; IMP biosynthesis via de novo pathway; 5-amino-1-(5-phospho-D-ribosyl)imidazole from N(2)-formyl-N(1)-(5-phospho-D-ribosyl)glycinamide: step 1/2. Part of the phosphoribosylformylglycinamidine synthase complex involved in the purines biosynthetic pathway. Catalyzes the ATP-dependent conversion of formylglycinamide ribonucleotide (FGAR) and glutamine to yield formylglycinamidine ribonucleotide (FGAM) and glutamate. The FGAM synthase complex is composed of three subunits. PurQ produces an ammonia molecule by converting glutamine to glutamate. PurL transfers the ammonia molecule to FGAR to form FGAM in an ATP-dependent manner. PurS interacts with PurQ and PurL and is thought to assist in the transfer of the ammonia molecule from PurQ to PurL. This is Phosphoribosylformylglycinamidine synthase subunit PurQ from Listeria monocytogenes serovar 1/2a (strain ATCC BAA-679 / EGD-e).